Consider the following 153-residue polypeptide: Putative trans-acting regulator pXO2-62/BXB0076/GBAA_pXO2_0076 (153 aa).

It belongs to the AtxA/AcpA family.

The sequence is that of Putative trans-acting regulator pXO2-62/BXB0076/GBAA_pXO2_0076 from Bacillus anthracis.